We begin with the raw amino-acid sequence, 412 residues long: Potassium channel, subfamily K, member 13 (412 aa).

Residues 1–21 (MACRSGCCCNSIGSFNEDNAR) are Cytoplasmic-facing. Residues 22-42 (FLMLALLIIIYLLCGAAVFSA) traverse the membrane as a helical segment. An intramembrane region (pore-forming) is located at residues 97–117 (WDFAGAFYFVGTVVSTIGFGM). Residues threonine 112, isoleucine 113, and glycine 114 each coordinate K(+). The selectivity filter 1 stretch occupies residues 112–117 (TIGFGM). A helical transmembrane segment spans residues 127-147 (IFLIFYGLIGCAATILFFNLF). The Cytoplasmic segment spans residues 148–198 (LERVITVIAFVLKFCHERRESRKAGPTQNCRRPSTDNRDRRTDSLAGWKPS). A helical transmembrane segment spans residues 199–219 (VYCVMLILGVAAILVSCCASA). Positions 229 to 249 (YLDALYFCFVAFSTIGFGDMV) form an intramembrane region, pore-forming. Threonine 242, isoleucine 243, glycine 244, and phenylalanine 245 together coordinate K(+). Residues 242–247 (TIGFGD) are selectivity filter 2. The helical transmembrane segment at 268-288 (LFILTGVCCIYSLFNVISIVI) threads the bilayer. At 289–412 (KQVLNWLLRR…NRLAETSVDR (124 aa)) the chain is on the cytoplasmic side. Polar residues predominate over residues 374–386 (MANGHPRQSGSSS). Residues 374–395 (MANGHPRQSGSSSRHNEFSGGV) are disordered.

The protein belongs to the two pore domain potassium channel (TC 1.A.1.8) family. Homodimer. Heterodimer. Brain and heart.

The protein resides in the cell membrane. The enzyme catalyses K(+)(in) = K(+)(out). The channel conductance is activated by arachidonic acid and inhibited by Ba(2+) ions, volatile anesthetics such as halothane and antiarrhythmic drug mexiletine. Insensitive to extracellular pH change. Its function is as follows. K(+) channel that conducts outward rectifying tonic currents potentiated by purinergic signals. Homo- and heterodimerizes to form functional channels with distinct regulatory and gating properties. Contributes most of K(+) currents at the plasma membrane of resting microglia. Maintains a depolarized membrane potential required for proper ramified microglia morphology and phagocytosis, selectively mediating microglial pruning of presynaptic compartments at hippocampal excitatory synapses. Upon local release of ATP caused by neuronal injury or infection, it is potentiated by purinergic signaling and contributes to ATP-triggered K(+) efflux underlying microglial NLRP3 inflammasome assembly and IL1B release. In Danio rerio (Zebrafish), this protein is Potassium channel, subfamily K, member 13.